We begin with the raw amino-acid sequence, 368 residues long: Aminomethyltransferase (368 aa).

It belongs to the GcvT family. In terms of assembly, the glycine cleavage system is composed of four proteins: P, T, L and H.

It carries out the reaction N(6)-[(R)-S(8)-aminomethyldihydrolipoyl]-L-lysyl-[protein] + (6S)-5,6,7,8-tetrahydrofolate = N(6)-[(R)-dihydrolipoyl]-L-lysyl-[protein] + (6R)-5,10-methylene-5,6,7,8-tetrahydrofolate + NH4(+). Functionally, the glycine cleavage system catalyzes the degradation of glycine. This Thermoanaerobacter sp. (strain X514) protein is Aminomethyltransferase.